Consider the following 692-residue polypeptide: MADPASYRPPPGSIPETPGVYRFRDEHGRVIYVGKAKSLRARLANYFADIHTLHPRTQHMVTTAGSVEWTVVSTEVEALQLEYTWIKEFDPRFNVRYRDDKSYPSLAVTLYEEFPRLQVMRGPKRRGVRYFGPYAHAWAIRETLDLLLRVFPARTCSSGVFKRAGQVGRPCLLGYIDRCSAPCVGRVDADAHRQIVDDFCDFMSGQTGRYLRRLEREMRAAAEAQEYERAARLRDDIGALRRAVEKQAVVLPDGTDADVIAFAQDELEAAVQIFYVRGGRVRGQRGWVVDKLEDVTTADLVEQFLTQEYLDGVRPAGTAGTADTADTADTADPAPAAQIPREILVPELPPDAEAVAELLERARGARVDLRVPRRGDKRTLMETVERNAKQAFTLHRTKRAGDLTARSRALADLQEALELPDAPLRIECFDVSNTQGTDVVASMVVFEDGLPRKSEYRRFSIRGVDGQDDVASMRETVHRRFSRYLAERARTGELEEYPGAPTGDDEAPETGRPRRFAYPPNLVVVDGGPPQVAAAARALDELGIESGPGGVALCGLAKRLEEVWLPDQDEPVILPRTSEALYLLQRVRDEAHRFAITYHRQKRSTSMVASALDDVPGLGETRRKALLRHFGSVAKVRAAGAEEIAQVPGIGPRTAEAIVAALARSAPGTDAAPAPAVDPLTGEIIDSAGVTR.

The 80-residue stretch at 16–95 (ETPGVYRFRD…IKEFDPRFNV (80 aa)) folds into the GIY-YIG domain. The 36-residue stretch at 208–243 (GRYLRRLEREMRAAAEAQEYERAARLRDDIGALRRA) folds into the UVR domain. The interval 492–511 (GELEEYPGAPTGDDEAPETG) is disordered.

It belongs to the UvrC family. As to quaternary structure, interacts with UvrB in an incision complex.

The protein resides in the cytoplasm. The UvrABC repair system catalyzes the recognition and processing of DNA lesions. UvrC both incises the 5' and 3' sides of the lesion. The N-terminal half is responsible for the 3' incision and the C-terminal half is responsible for the 5' incision. The polypeptide is UvrABC system protein C (Parafrankia sp. (strain EAN1pec)).